The sequence spans 394 residues: Acetate kinase (394 aa).

Asparagine 7 serves as a coordination point for Mg(2+). Lysine 14 is a binding site for ATP. Substrate is bound at residue arginine 88. Residue aspartate 145 is the Proton donor/acceptor of the active site. ATP-binding positions include histidine 205–glycine 209, aspartate 279–arginine 281, and glycine 327–asparagine 331. Glutamate 379 lines the Mg(2+) pocket.

This sequence belongs to the acetokinase family. Homodimer. Mg(2+) serves as cofactor. It depends on Mn(2+) as a cofactor.

The protein resides in the cytoplasm. It catalyses the reaction acetate + ATP = acetyl phosphate + ADP. Its pathway is metabolic intermediate biosynthesis; acetyl-CoA biosynthesis; acetyl-CoA from acetate: step 1/2. Functionally, catalyzes the formation of acetyl phosphate from acetate and ATP. Can also catalyze the reverse reaction. The chain is Acetate kinase from Campylobacter lari (strain RM2100 / D67 / ATCC BAA-1060).